The chain runs to 318 residues: NADH-ubiquinone oxidoreductase chain 1 (318 aa).

8 helical membrane-spanning segments follow: residues 2-22, 70-90, 100-120, 136-156, 172-192, 222-242, 253-273, and 294-314; these read FMIN…FLTL, MFII…SPLP, LGVL…LWSG, VAQT…VLLM, LWLL…TLAE, LFFL…AILF, ELYT…FLWI, and LPLT…TASI.

Belongs to the complex I subunit 1 family. Core subunit of respiratory chain NADH dehydrogenase (Complex I) which is composed of 45 different subunits.

It localises to the mitochondrion inner membrane. The catalysed reaction is a ubiquinone + NADH + 5 H(+)(in) = a ubiquinol + NAD(+) + 4 H(+)(out). In terms of biological role, core subunit of the mitochondrial membrane respiratory chain NADH dehydrogenase (Complex I) which catalyzes electron transfer from NADH through the respiratory chain, using ubiquinone as an electron acceptor. Essential for the catalytic activity and assembly of complex I. The protein is NADH-ubiquinone oxidoreductase chain 1 (MT-ND1) of Balaenoptera physalus (Fin whale).